The sequence spans 183 residues: MAATLQFLVCLVVAICLLSGVTTTQPHAGQPMDSTSVGGGLQEPEAPEVMFELLWAGLELDVMGQLHIQDEELASTHPGRRLRLLLQHHVPSDLEGTEQWLQQLQDLRKGPPLSTWDFEHLLLTGLSCVYRLHAASEAEERGRWAQVFALLAQETLWDLCKGFCPQDRPPSLGSWASILDPFP.

An N-terminal signal peptide occupies residues 1 to 23 (MAATLQFLVCLVVAICLLSGVTT).

Belongs to the FAM180 family.

It localises to the secreted. The sequence is that of Protein FAM180B (FAM180B) from Homo sapiens (Human).